Reading from the N-terminus, the 279-residue chain is Gas vesicle protein L2 (279 aa).

Belongs to the gas vesicle GvpF/GvpL family. In terms of assembly, gvpF to GvpM interact with each other in vitro, and may form multi-subunit complex(es). Interacts with GvpC, GvpN and GvpO.

Its subcellular location is the gas vesicle. In terms of biological role, proteins GvpF to GvpM might be involved in nucleating gas vesicle formation. A minor component of the gas vesicle. Gas vesicles are hollow, gas filled proteinaceous nanostructures found in several microbial planktonic microorganisms. They allow positioning of halobacteria at the optimal depth for growth in the poorly aerated, shallow brine pools of their habitat. Expression of 2 c-vac DNA fragments containing 2 divergently transcribed regions (gvpE-gvpF-gvpG-gvpH-gvpI-gvpJ-gvpK-gvpL-gvpM and gvpA-gvpC-gvpN-gvpO) allows H.volcanii to produce gas vesicles. The protein is Gas vesicle protein L2 of Halobacterium salinarum (strain ATCC 700922 / JCM 11081 / NRC-1) (Halobacterium halobium).